We begin with the raw amino-acid sequence, 390 residues long: Probable tRNA pseudouridine synthase D (390 aa).

The active-site Nucleophile is the aspartate 93. In terms of domain architecture, TRUD spans tyrosine 166 to proline 353.

The protein belongs to the pseudouridine synthase TruD family.

It catalyses the reaction uridine(13) in tRNA = pseudouridine(13) in tRNA. Could be responsible for synthesis of pseudouridine from uracil-13 in transfer RNAs. The chain is Probable tRNA pseudouridine synthase D from Methanococcus maripaludis (strain C5 / ATCC BAA-1333).